Reading from the N-terminus, the 20-residue chain is Dahlein-5.3 (20 aa).

As to expression, expressed by the skin dorsal glands.

The protein localises to the secreted. Functionally, has no antimicrobial activity. Strongly inhibits the formation of NO by neuronal nitric oxide synthase at micromolar concentrations. In Ranoidea dahlii (Dahl's aquatic frog), this protein is Dahlein-5.3.